The sequence spans 33 residues: Photosystem II reaction center protein Psb30 (33 aa).

The helical transmembrane segment at 5 to 25 (LIVQLTSLILISIAGPIIIAL) threads the bilayer.

The protein belongs to the Psb30/Ycf12 family. PSII is composed of 1 copy each of membrane proteins PsbA, PsbB, PsbC, PsbD, PsbE, PsbF, PsbH, PsbI, PsbJ, PsbK, PsbL, PsbM, PsbT, PsbY, PsbZ, Psb30/Ycf12, peripheral proteins of the oxygen-evolving complex and a large number of cofactors. It forms dimeric complexes.

It localises to the plastid. The protein resides in the chloroplast thylakoid membrane. Its function is as follows. A core subunit of photosystem II (PSII), probably helps stabilize the reaction center. In Euglena myxocylindracea, this protein is Photosystem II reaction center protein Psb30.